Reading from the N-terminus, the 98-residue chain is Large ribosomal subunit protein uL23 (98 aa).

The protein belongs to the universal ribosomal protein uL23 family. Part of the 50S ribosomal subunit. Contacts protein L29, and trigger factor when it is bound to the ribosome.

Its function is as follows. One of the early assembly proteins it binds 23S rRNA. One of the proteins that surrounds the polypeptide exit tunnel on the outside of the ribosome. Forms the main docking site for trigger factor binding to the ribosome. This Dinoroseobacter shibae (strain DSM 16493 / NCIMB 14021 / DFL 12) protein is Large ribosomal subunit protein uL23.